Consider the following 392-residue polypeptide: Formate-dependent phosphoribosylglycinamide formyltransferase (392 aa).

N(1)-(5-phospho-beta-D-ribosyl)glycinamide-binding positions include 22-23 and E82; that span reads EL. Residues R114, K155, 160–165, 195–198, and E203 each bind ATP; these read SSGKGQ and EGVV. One can recognise an ATP-grasp domain in the interval 119-308; the sequence is RLAAEELGLP…EFALHVRAFL (190 aa). Mg(2+) contacts are provided by E267 and E279. Residues D286, K355, and 362 to 363 each bind N(1)-(5-phospho-beta-D-ribosyl)glycinamide; that span reads RR.

Belongs to the PurK/PurT family. As to quaternary structure, homodimer.

It carries out the reaction N(1)-(5-phospho-beta-D-ribosyl)glycinamide + formate + ATP = N(2)-formyl-N(1)-(5-phospho-beta-D-ribosyl)glycinamide + ADP + phosphate + H(+). It functions in the pathway purine metabolism; IMP biosynthesis via de novo pathway; N(2)-formyl-N(1)-(5-phospho-D-ribosyl)glycinamide from N(1)-(5-phospho-D-ribosyl)glycinamide (formate route): step 1/1. Functionally, involved in the de novo purine biosynthesis. Catalyzes the transfer of formate to 5-phospho-ribosyl-glycinamide (GAR), producing 5-phospho-ribosyl-N-formylglycinamide (FGAR). Formate is provided by PurU via hydrolysis of 10-formyl-tetrahydrofolate. This Salmonella schwarzengrund (strain CVM19633) protein is Formate-dependent phosphoribosylglycinamide formyltransferase.